A 209-amino-acid chain; its full sequence is MAVLLLHQFKALPADKQIDTCSFLDSVSHLPAFFDCLGSAIFSPIKADITGNITKIRSVYESNPTQFKTLQMILEGEKELYGPKWPKAGATLALMWLKRGLKFIQVLLQSISDGERDDQNPNLIKVNITKAYDIALKNYHGWLVQKFFQTALIAAPYKDDFLKALSKGQAVKEEECIEKIRKFLVNYTTTIEAIYIMYNKMNAELDYKA.

2 repeat units span residues 45–55 (IKADITGNITK) and 56–66 (IRSVYESNPTQ). The segment at 45-66 (IKADITGNITKIRSVYESNPTQ) is 2 X 12 AA approximate tandem repeats. A beta-D-galactosyl-(1-&gt;4)-beta-D-glucosyl-(1&lt;-&gt;1)-N-[(9Z)-octadecenoyl]-sphing-4-enine-binding site is contributed by 48-55 (DITGNITK). Beta-D-galactosyl-(1-&gt;4)-beta-D-glucosyl-(1&lt;-&gt;1)-N-[(9Z)-octadecenoyl]-sphing-4-enine contacts are provided by His140 and Tyr207.

Belongs to the GLTP family.

It localises to the cytoplasm. Functionally, accelerates the intermembrane transfer of various glycolipids. Catalyzes the transfer of various glycosphingolipids between membranes but does not catalyze the transfer of phospholipids. May be involved in the intracellular translocation of glucosylceramides. This is Glycolipid transfer protein B (gltp-b) from Xenopus laevis (African clawed frog).